Here is a 183-residue protein sequence, read N- to C-terminus: Acireductone dioxygenase (183 aa).

Residues H95, H97, E101, and H139 each coordinate Fe(2+). Residues H95, H97, E101, and H139 each coordinate Ni(2+).

Belongs to the acireductone dioxygenase (ARD) family. In terms of assembly, monomer. The cofactor is Fe(2+). Requires Ni(2+) as cofactor.

The catalysed reaction is 1,2-dihydroxy-5-(methylsulfanyl)pent-1-en-3-one + O2 = 3-(methylsulfanyl)propanoate + CO + formate + 2 H(+). The enzyme catalyses 1,2-dihydroxy-5-(methylsulfanyl)pent-1-en-3-one + O2 = 4-methylsulfanyl-2-oxobutanoate + formate + 2 H(+). Its pathway is amino-acid biosynthesis; L-methionine biosynthesis via salvage pathway; L-methionine from S-methyl-5-thio-alpha-D-ribose 1-phosphate: step 5/6. In terms of biological role, catalyzes 2 different reactions between oxygen and the acireductone 1,2-dihydroxy-3-keto-5-methylthiopentene (DHK-MTPene) depending upon the metal bound in the active site. Fe-containing acireductone dioxygenase (Fe-ARD) produces formate and 2-keto-4-methylthiobutyrate (KMTB), the alpha-ketoacid precursor of methionine in the methionine recycle pathway. Ni-containing acireductone dioxygenase (Ni-ARD) produces methylthiopropionate, carbon monoxide and formate, and does not lie on the methionine recycle pathway. In Hydrogenobaculum sp. (strain Y04AAS1), this protein is Acireductone dioxygenase.